Consider the following 160-residue polypeptide: Ribonuclease P protein component 2 (160 aa).

Belongs to the eukaryotic/archaeal RNase P protein component 2 family. As to quaternary structure, consists of a catalytic RNA component and at least 4-5 protein subunits.

Its subcellular location is the cytoplasm. It carries out the reaction Endonucleolytic cleavage of RNA, removing 5'-extranucleotides from tRNA precursor.. In terms of biological role, part of ribonuclease P, a protein complex that generates mature tRNA molecules by cleaving their 5'-ends. The sequence is that of Ribonuclease P protein component 2 from Methanosphaerula palustris (strain ATCC BAA-1556 / DSM 19958 / E1-9c).